A 473-amino-acid chain; its full sequence is Aspartyl/glutamyl-tRNA(Asn/Gln) amidotransferase subunit B (473 aa).

It belongs to the GatB/GatE family. GatB subfamily. In terms of assembly, heterotrimer of A, B and C subunits.

It carries out the reaction L-glutamyl-tRNA(Gln) + L-glutamine + ATP + H2O = L-glutaminyl-tRNA(Gln) + L-glutamate + ADP + phosphate + H(+). It catalyses the reaction L-aspartyl-tRNA(Asn) + L-glutamine + ATP + H2O = L-asparaginyl-tRNA(Asn) + L-glutamate + ADP + phosphate + 2 H(+). Allows the formation of correctly charged Asn-tRNA(Asn) or Gln-tRNA(Gln) through the transamidation of misacylated Asp-tRNA(Asn) or Glu-tRNA(Gln) in organisms which lack either or both of asparaginyl-tRNA or glutaminyl-tRNA synthetases. The reaction takes place in the presence of glutamine and ATP through an activated phospho-Asp-tRNA(Asn) or phospho-Glu-tRNA(Gln). In Wolbachia sp. subsp. Drosophila simulans (strain wRi), this protein is Aspartyl/glutamyl-tRNA(Asn/Gln) amidotransferase subunit B.